The sequence spans 189 residues: Adenylate kinase (189 aa).

12–17 (GSGKTT) contributes to the ATP binding site. Residues 33 to 62 (STGDLLRAEVASGSELGKLIDGFISKGNLV) form an NMP region. AMP contacts are provided by residues Thr34, Arg39, 60–62 (NLV), 87–90 (GYPR), and Gln94. The LID stretch occupies residues 129-135 (GRARGAD). Arg130 lines the ATP pocket. AMP contacts are provided by Arg132 and Arg144. Residue Arg172 coordinates ATP.

It belongs to the adenylate kinase family. In terms of assembly, monomer.

It localises to the cytoplasm. The catalysed reaction is AMP + ATP = 2 ADP. Its pathway is purine metabolism; AMP biosynthesis via salvage pathway; AMP from ADP: step 1/1. In terms of biological role, catalyzes the reversible transfer of the terminal phosphate group between ATP and AMP. Plays an important role in cellular energy homeostasis and in adenine nucleotide metabolism. The sequence is that of Adenylate kinase from Campylobacter concisus (strain 13826).